The chain runs to 72 residues: LITAF domain-containing protein (72 aa).

Residues 1-71 (MPVQAVCPYC…CQRELFYYHR (71 aa)) enclose the LITAF domain. Zn(2+)-binding residues include Cys-7 and Cys-10. Residues 22-45 (PGALTWLLCTTLFLFGYVLGCCFL) are membrane-binding amphipathic helix. The Zn(2+) site is built by Cys-59 and Cys-62.

Belongs to the CDIP1/LITAF family.

Its subcellular location is the membrane. The chain is LITAF domain-containing protein from Homo sapiens (Human).